The following is a 159-amino-acid chain: Large ribosomal subunit protein uL11 (159 aa).

Belongs to the universal ribosomal protein uL11 family. Part of the ribosomal stalk of the 50S ribosomal subunit. Interacts with L10 and the large rRNA to form the base of the stalk. L10 forms an elongated spine to which L12 dimers bind in a sequential fashion forming a multimeric L10(L12)X complex.

Functionally, forms part of the ribosomal stalk which helps the ribosome interact with GTP-bound translation factors. The chain is Large ribosomal subunit protein uL11 from Methanothrix thermoacetophila (strain DSM 6194 / JCM 14653 / NBRC 101360 / PT) (Methanosaeta thermophila).